A 381-amino-acid polypeptide reads, in one-letter code: MAIFIRKTHPLLKIMNHALVDLPAPSNISLWWNFGSLLGLCLIIQILTGLFLAMHYTADVSMAFSSVVHICRDVNYGWLIRNIHANGASLFFICVYLHIARGLYYGSYLYKETWNIGVILLFLLMATAFVGYVLPWGQMSFWGATVITNLLSAFPYIGNMLVQWIWGGFSVDNATLTRFFAFHFLLPFLILALTIIHLLFLHETGSNNPLGINSDADKISFHPYFSYKDLLGFFVMIFFLTTLALFMPNLLGDAENFIPANPLVTPPHIKPEWYFLFAYAILRSIPNKLGGVLALLFSIFILMLVPLLHTSKQRSNIFRPLTQIFFWLLVANSIILTWIGGQPVEQPFITVGQIASVSYFSLFLIIMPFASWCENKILSLN.

4 helical membrane-spanning segments follow: residues 34–54, 78–99, 114–134, and 179–199; these read FGSL…FLAM, WLIR…YLHI, WNIG…GYVL, and FFAF…IHLL. The heme b site is built by histidine 84 and histidine 98. Heme b is bound by residues histidine 183 and histidine 197. Residue histidine 202 coordinates a ubiquinone. 4 helical membrane passes run 227–247, 289–309, 321–341, and 348–368; these read YKDL…ALFM, LGGV…PLLH, LTQI…WIGG, and FITV…IIMP.

The protein belongs to the cytochrome b family. In terms of assembly, the cytochrome bc1 complex contains 3 respiratory subunits (MT-CYB, CYC1 and UQCRFS1), 2 core proteins (UQCRC1 and UQCRC2) and probably 6 low-molecular weight proteins. Heme b serves as cofactor.

Its subcellular location is the mitochondrion inner membrane. Its function is as follows. Component of the ubiquinol-cytochrome c reductase complex (complex III or cytochrome b-c1 complex) that is part of the mitochondrial respiratory chain. The b-c1 complex mediates electron transfer from ubiquinol to cytochrome c. Contributes to the generation of a proton gradient across the mitochondrial membrane that is then used for ATP synthesis. This is Cytochrome b (mt-cyb) from Sphyrna tiburo tiburo (Hammerhead shark).